The chain runs to 102 residues: Large ribosomal subunit protein bL21 (102 aa).

The protein belongs to the bacterial ribosomal protein bL21 family. As to quaternary structure, part of the 50S ribosomal subunit. Contacts protein L20.

Functionally, this protein binds to 23S rRNA in the presence of protein L20. The protein is Large ribosomal subunit protein bL21 of Myxococcus xanthus (strain DK1622).